The primary structure comprises 120 residues: Large ribosomal subunit protein bL20 (120 aa).

It belongs to the bacterial ribosomal protein bL20 family.

Its function is as follows. Binds directly to 23S ribosomal RNA and is necessary for the in vitro assembly process of the 50S ribosomal subunit. It is not involved in the protein synthesizing functions of that subunit. In Baumannia cicadellinicola subsp. Homalodisca coagulata, this protein is Large ribosomal subunit protein bL20.